Consider the following 344-residue polypeptide: rRNA 2'-O-methyltransferase fibrillarin (344 aa).

A disordered region spans residues 1-113; sequence MGKPGFSPRG…GFKGGKTVTI (113 aa). The segment covering 8-107 has biased composition (gly residues); sequence PRGGGGGGGG…RGGGAGGFKG (100 aa). Arg-9, Arg-23, Arg-25, Arg-40, Arg-42, Arg-48, Arg-51, Arg-58, Arg-63, Arg-71, Arg-77, Arg-83, Arg-88, Arg-93, and Arg-98 each carry asymmetric dimethylarginine. S-adenosyl-L-methionine is bound by residues 197 to 198, 216 to 217, 241 to 242, and 261 to 264; these read TT, EF, DA, and DVAQ.

The protein belongs to the methyltransferase superfamily. Fibrillarin family. In terms of assembly, component of box C/D small nucleolar ribonucleoprotein (snoRNP) particles. It is associated with the U3, U8 and U13 small nuclear RNAs. By homology to other fibrillarins, some or all of the N-terminal domain arginines are modified to asymmetric dimethylarginine (DMA).

Its subcellular location is the nucleus. It is found in the nucleolus. The catalysed reaction is L-glutaminyl-[histone H2A] + S-adenosyl-L-methionine = N(5)-methyl-L-glutaminyl-[histone H2A] + S-adenosyl-L-homocysteine + H(+). Its function is as follows. S-adenosyl-L-methionine-dependent methyltransferase that has the ability to methylate both RNAs and proteins. Involved in pre-rRNA processing. Utilizes the methyl donor S-adenosyl-L-methionine to catalyze the site-specific 2'-hydroxyl methylation of ribose moieties in pre-ribosomal RNA. Site specificity is provided by a guide RNA that base pairs with the substrate. Methylation occurs at a characteristic distance from the sequence involved in base pairing with the guide RNA. Also acts as a protein methyltransferase by mediating methylation of 'Gln-105' of histone H2A (H2AQ105me), a modification that impairs binding of the FACT complex and is specifically present at 35S ribosomal DNA locus. The polypeptide is rRNA 2'-O-methyltransferase fibrillarin (Drosophila melanogaster (Fruit fly)).